A 211-amino-acid polypeptide reads, in one-letter code: Thiamine-phosphate synthase (211 aa).

4-amino-2-methyl-5-(diphosphooxymethyl)pyrimidine-binding positions include Gln37–Lys41 and Asn69. Mg(2+) is bound by residues Asp70 and Asp89. Position 108 (Ser108) interacts with 4-amino-2-methyl-5-(diphosphooxymethyl)pyrimidine. Thr134 to Thr136 provides a ligand contact to 2-[(2R,5Z)-2-carboxy-4-methylthiazol-5(2H)-ylidene]ethyl phosphate. Lys137 is a binding site for 4-amino-2-methyl-5-(diphosphooxymethyl)pyrimidine. Residues Gly166 and Val186–Ser187 contribute to the 2-[(2R,5Z)-2-carboxy-4-methylthiazol-5(2H)-ylidene]ethyl phosphate site.

Belongs to the thiamine-phosphate synthase family. Mg(2+) serves as cofactor.

The enzyme catalyses 2-[(2R,5Z)-2-carboxy-4-methylthiazol-5(2H)-ylidene]ethyl phosphate + 4-amino-2-methyl-5-(diphosphooxymethyl)pyrimidine + 2 H(+) = thiamine phosphate + CO2 + diphosphate. It catalyses the reaction 2-(2-carboxy-4-methylthiazol-5-yl)ethyl phosphate + 4-amino-2-methyl-5-(diphosphooxymethyl)pyrimidine + 2 H(+) = thiamine phosphate + CO2 + diphosphate. It carries out the reaction 4-methyl-5-(2-phosphooxyethyl)-thiazole + 4-amino-2-methyl-5-(diphosphooxymethyl)pyrimidine + H(+) = thiamine phosphate + diphosphate. The protein operates within cofactor biosynthesis; thiamine diphosphate biosynthesis; thiamine phosphate from 4-amino-2-methyl-5-diphosphomethylpyrimidine and 4-methyl-5-(2-phosphoethyl)-thiazole: step 1/1. Condenses 4-methyl-5-(beta-hydroxyethyl)thiazole monophosphate (THZ-P) and 2-methyl-4-amino-5-hydroxymethyl pyrimidine pyrophosphate (HMP-PP) to form thiamine monophosphate (TMP). In Escherichia coli O6:H1 (strain CFT073 / ATCC 700928 / UPEC), this protein is Thiamine-phosphate synthase.